A 73-amino-acid chain; its full sequence is Myosin-IB light chain (73 aa).

2 consecutive EF-hand domains span residues 3-38 (DEKT…GLPM) and 38-73 (MTEA…VDES). D16, D18, D20, and E27 together coordinate Ca(2+).

As to quaternary structure, myosin I is a dimer of a heavy and a light chain. Inability to self-assemble into filaments. Interacts with myoB. Does not interact with myoC or myoD.

In terms of biological role, functions as the light chain for myosin-B. Binds calcium with submicromolar affinity and may sense physiological calcium changes. In Dictyostelium discoideum (Social amoeba), this protein is Myosin-IB light chain (mlcB).